A 487-amino-acid chain; its full sequence is Glycogen synthase 1 (487 aa).

ADP-alpha-D-glucose is bound at residue Lys15.

This sequence belongs to the glycosyltransferase 1 family. Bacterial/plant glycogen synthase subfamily.

It carries out the reaction [(1-&gt;4)-alpha-D-glucosyl](n) + ADP-alpha-D-glucose = [(1-&gt;4)-alpha-D-glucosyl](n+1) + ADP + H(+). It functions in the pathway glycan biosynthesis; glycogen biosynthesis. In terms of biological role, synthesizes alpha-1,4-glucan chains using ADP-glucose. This Nitrosococcus oceani (strain ATCC 19707 / BCRC 17464 / JCM 30415 / NCIMB 11848 / C-107) protein is Glycogen synthase 1.